The sequence spans 61 residues: Large ribosomal subunit protein bL32 (61 aa).

Positions 1 to 16 (MAVPRRKTSPSRRGMR) are enriched in basic residues. A disordered region spans residues 1-61 (MAVPRRKTSP…RQVLKAKSDS (61 aa)). The span at 27–44 (YAEDKDSGELRRPHHLDL) shows a compositional bias: basic and acidic residues.

Belongs to the bacterial ribosomal protein bL32 family.

The polypeptide is Large ribosomal subunit protein bL32 (Nitrobacter winogradskyi (strain ATCC 25391 / DSM 10237 / CIP 104748 / NCIMB 11846 / Nb-255)).